Reading from the N-terminus, the 50-residue chain is Large ribosomal subunit protein eL39 (50 aa).

The span at 1 to 12 (MGKKSKASKKRL) shows a compositional bias: basic residues. Disordered regions lie at residues 1–20 (MGKK…RQNS) and 30–50 (TNRD…DTDE).

This sequence belongs to the eukaryotic ribosomal protein eL39 family.

The protein is Large ribosomal subunit protein eL39 (rpl39e) of Halobacterium salinarum (strain ATCC 700922 / JCM 11081 / NRC-1) (Halobacterium halobium).